We begin with the raw amino-acid sequence, 429 residues long: MKKQNNLRSLAAQAVEQVVEQGQSLSNVLPPLQQKVADKDKALLQELCFGVLRTLSQLEWLINKLMSRPMTGKQRTVHYLIMVGFYQLLYTRVPPHAALAETVEGAVSIKRPQLKGLINGVLRQFQRQQETLLNEFATSDARFLHPGWLVKRLQNAYPTQWQRIIDANNQRPPMWLRVNRTHHTRDGWLGLLEDAGMKGYPHPDYPDAVRLETPAPVHALPGFAEGWVTVQDASAQGCAVFLAPQNGEHILDLCAAPGGKTTHILEVAPEADVLAVDIDEQRLSRVYDNLKRLGMKATVKQGDGRYPAQWCGEQQFDRILLDAPCSATGVIRRHPDIKWLRRDRDIAELAQLQAEILDAVWPRLKPGGTLVYATCSVLPEENRDQIKTFLQRTPDAALSETGTPDQPGQQNLPGGEEGDGFFYAKLIKK.

S-adenosyl-L-methionine-binding positions include 254–260 (CAAPGGK), Asp277, Asp303, and Asp322. Cys375 functions as the Nucleophile in the catalytic mechanism. The disordered stretch occupies residues 397-419 (ALSETGTPDQPGQQNLPGGEEGD). The segment covering 400–412 (ETGTPDQPGQQNL) has biased composition (polar residues).

Belongs to the class I-like SAM-binding methyltransferase superfamily. RsmB/NOP family.

It is found in the cytoplasm. It carries out the reaction cytidine(967) in 16S rRNA + S-adenosyl-L-methionine = 5-methylcytidine(967) in 16S rRNA + S-adenosyl-L-homocysteine + H(+). In terms of biological role, specifically methylates the cytosine at position 967 (m5C967) of 16S rRNA. This Salmonella choleraesuis (strain SC-B67) protein is Ribosomal RNA small subunit methyltransferase B.